A 328-amino-acid chain; its full sequence is GMP reductase (328 aa).

Cysteine 177 (thioimidate intermediate) is an active-site residue. 206-229 (IVADGGIRYNGDIAKSIRFGASMV) lines the NADP(+) pocket.

Belongs to the IMPDH/GMPR family. GuaC type 2 subfamily.

The enzyme catalyses IMP + NH4(+) + NADP(+) = GMP + NADPH + 2 H(+). Functionally, catalyzes the irreversible NADPH-dependent deamination of GMP to IMP. It functions in the conversion of nucleobase, nucleoside and nucleotide derivatives of G to A nucleotides, and in maintaining the intracellular balance of A and G nucleotides. This is GMP reductase from Levilactobacillus brevis (strain ATCC 367 / BCRC 12310 / CIP 105137 / JCM 1170 / LMG 11437 / NCIMB 947 / NCTC 947) (Lactobacillus brevis).